The sequence spans 131 residues: Class I hydrophobin 9 (131 aa).

An N-terminal signal peptide occupies residues Met-1–Ala-23. 4 disulfides stabilise this stretch: Cys-52–Cys-112, Cys-59–Cys-106, Cys-60–Cys-93, and Cys-113–Cys-126. Asn-53 carries N-linked (GlcNAc...) asparagine glycosylation. Residue Asn-115 is glycosylated (N-linked (GlcNAc...) asparagine).

The protein belongs to the fungal hydrophobin family. As to quaternary structure, self-assembles to form functional amyloid fibrils called rodlets. Self-assembly into fibrillar rodlets occurs spontaneously at hydrophobic:hydrophilic interfaces and the rodlets further associate laterally to form amphipathic monolayers.

It is found in the secreted. It localises to the cell wall. In terms of biological role, aerial growth, conidiation, and dispersal of filamentous fungi in the environment rely upon a capability of their secreting small amphipathic proteins called hydrophobins (HPBs) with low sequence identity. Class I can self-assemble into an outermost layer of rodlet bundles on aerial cell surfaces, conferring cellular hydrophobicity that supports fungal growth, development and dispersal; whereas Class II form highly ordered films at water-air interfaces through intermolecular interactions but contribute nothing to the rodlet structure. This is Class I hydrophobin 9 from Flammulina velutipes (Agaricus velutipes).